The sequence spans 195 residues: Ferredoxin-2, mitochondrial (195 aa).

A mitochondrion-targeting transit peptide spans methionine 1–cysteine 61. One can recognise a 2Fe-2S ferredoxin-type domain in the interval asparagine 81–threonine 182. [2Fe-2S] cluster-binding residues include cysteine 117, cysteine 123, cysteine 126, and cysteine 163.

The protein belongs to the adrenodoxin/putidaredoxin family. In terms of assembly, component of the mitochondrial core iron-sulfur cluster (ISC) complex composed of NFS1, LYRM4, NDUFAB1, ISCU, FXN, and FDX2; this complex is a heterohexamer containing two copies of each monomer. Form a heterodimer complex with NFS1. It depends on [2Fe-2S] cluster as a cofactor.

Its subcellular location is the mitochondrion. The protein resides in the mitochondrion matrix. Electron donor, of the core iron-sulfur cluster (ISC) assembly complex, that acts to reduce the persulfide into sulfide during [2Fe-2S] clusters assembly on the scaffolding protein ISCU. The core iron-sulfur cluster (ISC) assembly complex is involved in the de novo synthesis of a [2Fe-2S] cluster, the first step of the mitochondrial iron-sulfur protein biogenesis. This process is initiated by the cysteine desulfurase complex (NFS1:LYRM4:NDUFAB1) that produces persulfide which is delivered on the scaffold protein ISCU in a FXN-dependent manner. Then this complex is stabilized by FDX2 which provides reducing equivalents to accomplish the [2Fe-2S] cluster assembly. Finally, the [2Fe-2S] cluster is transferred from ISCU to chaperone proteins, including HSCB, HSPA9 and GLRX5. Essential for coenzyme Q biosynthesis: together with FDXR, transfers the electrons required for the hydroxylation reaction performed by COQ6. In Danio rerio (Zebrafish), this protein is Ferredoxin-2, mitochondrial.